Here is a 433-residue protein sequence, read N- to C-terminus: uncharacterized protein (433 aa).

The 59-residue stretch at 1–59 folds into the TRAM domain; it reads MGEEYEVEIGPVAHGGHCIARTSEGQVLFVRHALPGERVLARVTEGEEGARYLRADAVE. 4 residues coordinate [4Fe-4S] cluster: Cys72, Cys80, Cys83, and Cys168. S-adenosyl-L-methionine contacts are provided by Gln262, Tyr291, Glu315, and Asp359. The active-site Nucleophile is Cys386.

This sequence belongs to the class I-like SAM-binding methyltransferase superfamily. RNA M5U methyltransferase family.

This is an uncharacterized protein from Streptomyces avermitilis (strain ATCC 31267 / DSM 46492 / JCM 5070 / NBRC 14893 / NCIMB 12804 / NRRL 8165 / MA-4680).